The chain runs to 84 residues: MLLAVLLQSAAAAGLGKLGAALGAAIAVIGAGIGIGKIGGSAMEAIARQPEAAGDIRMNMIIIAALVEGVALIAIIVCLLTLFL.

2 helical membrane-spanning segments follow: residues 21 to 38 (ALGA…IGKI) and 60 to 80 (MIII…VCLL).

Belongs to the ATPase C chain family. In terms of assembly, F-type ATPases have 2 components, F(1) - the catalytic core - and F(0) - the membrane proton channel. F(1) has five subunits: alpha(3), beta(3), gamma(1), delta(1), epsilon(1). F(0) has three main subunits: a(1), b(2) and c(10-14). The alpha and beta chains form an alternating ring which encloses part of the gamma chain. F(1) is attached to F(0) by a central stalk formed by the gamma and epsilon chains, while a peripheral stalk is formed by the delta and b chains.

It is found in the cell inner membrane. Its function is as follows. F(1)F(0) ATP synthase produces ATP from ADP in the presence of a proton or sodium gradient. F-type ATPases consist of two structural domains, F(1) containing the extramembraneous catalytic core and F(0) containing the membrane proton channel, linked together by a central stalk and a peripheral stalk. During catalysis, ATP synthesis in the catalytic domain of F(1) is coupled via a rotary mechanism of the central stalk subunits to proton translocation. Functionally, key component of the F(0) channel; it plays a direct role in translocation across the membrane. A homomeric c-ring of between 10-14 subunits forms the central stalk rotor element with the F(1) delta and epsilon subunits. The sequence is that of ATP synthase subunit c from Phocaeicola vulgatus (strain ATCC 8482 / DSM 1447 / JCM 5826 / CCUG 4940 / NBRC 14291 / NCTC 11154) (Bacteroides vulgatus).